A 774-amino-acid chain; its full sequence is Lysyl oxidase homolog 2 (774 aa).

Residues 1-25 (MERPLCSHLCSCLAMLALLSPLSLA) form the signal peptide. SRCR domains lie at 58–159 (LRLA…VVCS), 188–302 (IRAI…VSCV), 326–425 (VRLR…VRCN), and 435–544 (LRLN…VACS). 9 disulfide bridges follow: Cys-84–Cys-148, Cys-97–Cys-158, Cys-128–Cys-138, Cys-218–Cys-291, Cys-231–Cys-301, Cys-265–Cys-275, Cys-351–Cys-414, Cys-364–Cys-424, and Cys-395–Cys-405. N-linked (GlcNAc...) asparagine glycosylation is present at Asn-288. The N-linked (GlcNAc...) (complex) asparagine glycan is linked to Asn-455. Disulfide bonds link Cys-464–Cys-530, Cys-477–Cys-543, and Cys-511–Cys-521. Residues 548 to 751 (PDLVLNAEMV…WMYNCHIGGS (204 aa)) are lysyl-oxidase like. Residues Asp-549 and Leu-550 each coordinate Ca(2+). Cystine bridges form between Cys-573–Cys-625, Cys-579–Cys-695, Cys-657–Cys-673, and Cys-663–Cys-685. Cu cation is bound by residues His-626, His-628, and His-630. An N-linked (GlcNAc...) (complex) asparagine glycan is attached at Asn-644. The lysine tyrosylquinone (Lys-Tyr) cross-link spans 653 to 689 (KASFCLEDTECEGDIQKNYECANFGDQGITMGCWDMY). Position 689 is a 2',4',5'-topaquinone (Tyr-689). Glu-722, Asp-724, Asn-727, and Asn-728 together coordinate Ca(2+). Cysteines 732 and 746 form a disulfide.

This sequence belongs to the lysyl oxidase family. In terms of assembly, component of some chromatin repressor complex. Interacts with SNAI1. Interacts with TAF10. Interacts with HSPA5. Interacts with EFEMP2. The cofactor is Cu cation. It depends on lysine tyrosylquinone residue as a cofactor. In terms of processing, the lysine tyrosylquinone cross-link (LTQ) is generated by condensation of the epsilon-amino group of a lysine with a topaquinone produced by oxidation of tyrosine. N-glycosylated. N-glycosylation on Asn-455 and Asn-644 may be essential for proper folding and secretion; may be composed of a fucosylated carbohydrates attached to a trimannose N-linked glycan core. In terms of tissue distribution, expressed in many tissues. Highest expression in reproductive tissues, placenta, uterus and prostate. In esophageal epithelium, expressed in the basal, prickle and granular cell layers. Up-regulated in a number of cancers cells and tissues.

It is found in the secreted. The protein localises to the extracellular space. It localises to the extracellular matrix. Its subcellular location is the basement membrane. The protein resides in the nucleus. It is found in the chromosome. The protein localises to the endoplasmic reticulum. The catalysed reaction is L-lysyl-[protein] + O2 + H2O = (S)-2-amino-6-oxohexanoyl-[protein] + H2O2 + NH4(+). Its activity is regulated as follows. According to some reports, it is inhibited by beta-aminopropionitrile (BAPN). According to another report, it is not inhibited by beta-aminopropionitrile (BAPN). Specifically inhibited by a mouse monoclonal antibody AB0023, inhibition occurs in a non-competitive manner. Its function is as follows. Mediates the post-translational oxidative deamination of lysine residues on target proteins leading to the formation of deaminated lysine (allysine). Acts as a transcription corepressor and specifically mediates deamination of trimethylated 'Lys-4' of histone H3 (H3K4me3), a specific tag for epigenetic transcriptional activation. Shows no activity against histone H3 when it is trimethylated on 'Lys-9' (H3K9me3) or 'Lys-27' (H3K27me3) or when 'Lys-4' is monomethylated (H3K4me1) or dimethylated (H3K4me2). Also mediates deamination of methylated TAF10, a member of the transcription factor IID (TFIID) complex, which induces release of TAF10 from promoters, leading to inhibition of TFIID-dependent transcription. LOXL2-mediated deamination of TAF10 results in transcriptional repression of genes required for embryonic stem cell pluripotency including POU5F1/OCT4, NANOG, KLF4 and SOX2. Involved in epithelial to mesenchymal transition (EMT) via interaction with SNAI1 and participates in repression of E-cadherin CDH1, probably by mediating deamination of histone H3. During EMT, involved with SNAI1 in negatively regulating pericentromeric heterochromatin transcription. SNAI1 recruits LOXL2 to pericentromeric regions to oxidize histone H3 and repress transcription which leads to release of heterochromatin component CBX5/HP1A, enabling chromatin reorganization and acquisition of mesenchymal traits. Interacts with the endoplasmic reticulum protein HSPA5 which activates the IRE1-XBP1 pathway of the unfolded protein response, leading to expression of several transcription factors involved in EMT and subsequent EMT induction. Involved in E-cadherin repression following hypoxia, a hallmark of EMT believed to amplify tumor aggressiveness, suggesting that it may play a role in tumor progression. When secreted into the extracellular matrix, promotes cross-linking of extracellular matrix proteins by mediating oxidative deamination of peptidyl lysine residues in precursors to fibrous collagen and elastin. Acts as a regulator of sprouting angiogenesis, probably via collagen IV scaffolding. Acts as a regulator of chondrocyte differentiation, probably by regulating expression of factors that control chondrocyte differentiation. This chain is Lysyl oxidase homolog 2 (LOXL2), found in Homo sapiens (Human).